A 294-amino-acid chain; its full sequence is Nucleotide-binding protein DICTH_1001 (294 aa).

10-17 contacts ATP; the sequence is GLSGAGKS. GTP is bound at residue 61–64; sequence DIRT.

It belongs to the RapZ-like family.

Displays ATPase and GTPase activities. The polypeptide is Nucleotide-binding protein DICTH_1001 (Dictyoglomus thermophilum (strain ATCC 35947 / DSM 3960 / H-6-12)).